Consider the following 476-residue polypeptide: UDP-N-acetylmuramate--L-alanine ligase (476 aa).

Residue 125 to 131 coordinates ATP; it reads GTHGKTT.

It belongs to the MurCDEF family.

Its subcellular location is the cytoplasm. The catalysed reaction is UDP-N-acetyl-alpha-D-muramate + L-alanine + ATP = UDP-N-acetyl-alpha-D-muramoyl-L-alanine + ADP + phosphate + H(+). The protein operates within cell wall biogenesis; peptidoglycan biosynthesis. In terms of biological role, cell wall formation. The polypeptide is UDP-N-acetylmuramate--L-alanine ligase (Actinobacillus succinogenes (strain ATCC 55618 / DSM 22257 / CCUG 43843 / 130Z)).